Here is a 266-residue protein sequence, read N- to C-terminus: Glucosamine-6-phosphate deaminase (266 aa).

Asp-72 (proton acceptor; for enolization step) is an active-site residue. The active-site For ring-opening step is Asp-141. Residue His-143 is the Proton acceptor; for ring-opening step of the active site. The For ring-opening step role is filled by Glu-148.

Belongs to the glucosamine/galactosamine-6-phosphate isomerase family. NagB subfamily. Homohexamer; trimer of disulfide-linked dimers.

It carries out the reaction alpha-D-glucosamine 6-phosphate + H2O = beta-D-fructose 6-phosphate + NH4(+). Its pathway is amino-sugar metabolism; N-acetylneuraminate degradation; D-fructose 6-phosphate from N-acetylneuraminate: step 5/5. With respect to regulation, allosterically activated by N-acetylglucosamine 6-phosphate (GlcNAc6P). In terms of biological role, catalyzes the reversible isomerization-deamination of glucosamine 6-phosphate (GlcN6P) to form fructose 6-phosphate (Fru6P) and ammonium ion. This is Glucosamine-6-phosphate deaminase from Shigella boydii serotype 18 (strain CDC 3083-94 / BS512).